Consider the following 23-residue polypeptide: Unknown protein 1 (23 aa).

The polypeptide is Unknown protein 1 (Coniferiporia sulphurascens (Laminated root rot fungus)).